We begin with the raw amino-acid sequence, 120 residues long: Ragulator complex protein LAMTOR4 homolog (120 aa).

The tract at residues 93 to 120 (QNGVTTTTSSSSSNSVYNDASDSGAVLA) is disordered. Low complexity predominate over residues 97-107 (TTTTSSSSSNS).

It belongs to the LAMTOR4 family. Part of the Ragulator complex composed of Lamtor3, Lamtor2, CG14184, CG14812, and Lamtor4.

Its subcellular location is the lysosome. In terms of biological role, regulator of the TOR pathway, a signaling cascade that promotes cell growth in response to growth factors, energy levels, and amino acids. As part of the Ragulator complex, may activate the TOR signaling cascade in response to amino acids. This chain is Ragulator complex protein LAMTOR4 homolog, found in Drosophila melanogaster (Fruit fly).